Reading from the N-terminus, the 293-residue chain is MGFEMKPEKEVLELISSKNQCKSNPNSVKKKNKNKNKKMMMTWRRKKIDSPADGITAVRRLFNTCKEVFSNGGPGVIPSEDKIQQLREILDDMKPEDVGLTPTMPYFRPNSGVEARSSPPITYLHLHQCDQFSIGIFCLPPSGVIPLHNHPGMTVFSKLLFGTMHIKSYDWVVDAPMRDSKTRLAKLKVDSTFTAPCNASILYPEDGGNMHRFTAITACAVLDVLGPPYCNPEGRHCTYFLEFPLDKLSSEDDDVLSSEEEKEGYAWLQERDDNPEDHTNVVGALYRGPKVED.

Residues His148, His150, and His211 each coordinate Fe cation. Residues 250-293 (SEDDDVLSSEEEKEGYAWLQERDDNPEDHTNVVGALYRGPKVED) are disordered. Over residues 251-262 (EDDDVLSSEEEK) the composition is skewed to acidic residues. Basic and acidic residues predominate over residues 269–279 (QERDDNPEDHT).

This sequence belongs to the cysteine dioxygenase family. Requires Fe(2+) as cofactor.

It is found in the nucleus. The protein resides in the cytoplasm. The enzyme catalyses L-cysteine + O2 = 3-sulfino-L-alanine + H(+). Functionally, catalyzes the oxidation of N-terminal cysteine residues (N-Cys), thus preparing the protein for N-end rule pathway-mediated proteasomal degradation, upstream of the N-end rule enzymes ATE1, ATE2 and PRT6. Controls the preparation of the group VII ethylene response factor (ERF-VII) proteins for degradation via the 26S proteasome N-end rule pathway. Acts as an oxygen sensor that controls the stability of ERF-VII proteins, which are stabilized in flooding-induced hypoxia, and regulate transcriptional adaptation to these adverse conditions. Not active on Cys located inside or at the C-terminus of a peptide. Acts redundantly with PCO2 to repress the anaerobic response. In Arabidopsis thaliana (Mouse-ear cress), this protein is Plant cysteine oxidase 1.